The primary structure comprises 62 residues: DNA-directed RNA polymerase subunit Rpo10 (62 aa).

The Zn(2+) site is built by Cys-6, Cys-9, Cys-43, and Cys-44.

This sequence belongs to the archaeal Rpo10/eukaryotic RPB10 RNA polymerase subunit family. In terms of assembly, part of the RNA polymerase complex. Requires Zn(2+) as cofactor.

Its subcellular location is the cytoplasm. The enzyme catalyses RNA(n) + a ribonucleoside 5'-triphosphate = RNA(n+1) + diphosphate. Functionally, DNA-dependent RNA polymerase (RNAP) catalyzes the transcription of DNA into RNA using the four ribonucleoside triphosphates as substrates. In Methanocorpusculum labreanum (strain ATCC 43576 / DSM 4855 / Z), this protein is DNA-directed RNA polymerase subunit Rpo10.